The sequence spans 239 residues: tRNA (guanine-N(1)-)-methyltransferase (239 aa).

Residues Gly108 and 127–132 (LGDFVL) contribute to the S-adenosyl-L-methionine site.

The protein belongs to the RNA methyltransferase TrmD family. As to quaternary structure, homodimer.

The protein localises to the cytoplasm. It carries out the reaction guanosine(37) in tRNA + S-adenosyl-L-methionine = N(1)-methylguanosine(37) in tRNA + S-adenosyl-L-homocysteine + H(+). Functionally, specifically methylates guanosine-37 in various tRNAs. This Streptococcus pyogenes serotype M6 (strain ATCC BAA-946 / MGAS10394) protein is tRNA (guanine-N(1)-)-methyltransferase.